Here is a 401-residue protein sequence, read N- to C-terminus: Nodal homolog 3-B (401 aa).

The signal sequence occupies residues 1 to 18 (MALLNLFFCLVFSSPLMA). The propeptide occupies 19-274 (MPPVLQGRKS…KVNGFRRLRR (256 aa)). N-linked (GlcNAc...) asparagine glycosylation is found at Asn168, Asn337, Asn341, and Asn344. 2 disulfides stabilise this stretch: Cys299–Cys365 and Cys328–Cys396.

Belongs to the TGF-beta family. As to quaternary structure, monomer. The propeptide region interacts with bmp4 in a non-covalent manner. As to expression, expressed in the dorsal marginal region of late blastula, becoming restricted to the dorsal blastopore lip (Spemann organizer) at the early gastrula stage.

The protein localises to the secreted. Exhibits mesoderm-dorsalizing activity and neural-inducing activity, but lacks mesoderm-inducing activity. Regulates the expression of specific mesodermal and neural genes. Induces convergent extension movements at the embryonic midline by activating the fgf signaling pathway to induce t/bra expression in the organizer region. Acts with wnt11 to induce Spemann organizer cells and induce axis formation. The unprocessed protein antagonizes bmp-signaling. The protein is Nodal homolog 3-B (nodal3-b) of Xenopus laevis (African clawed frog).